The following is a 68-amino-acid chain: Large ribosomal subunit protein bL35 (68 aa).

The protein belongs to the bacterial ribosomal protein bL35 family.

The protein is Large ribosomal subunit protein bL35 of Onion yellows phytoplasma (strain OY-M).